We begin with the raw amino-acid sequence, 399 residues long: Elongation factor Tu 1 (399 aa).

The region spanning 17–208 (KPHVNVGTIG…LDDYVEVPPR (192 aa)) is the tr-type G domain. Residues 26–33 (GHVDHGKT) form a G1 region. GTP is bound at residue 26–33 (GHVDHGKT). Thr33 lines the Mg(2+) pocket. Positions 62-66 (GITIA) are G2. Positions 83–86 (DCPG) are G3. Residues 83–87 (DCPGH) and 138–141 (NKAD) contribute to the GTP site. Residues 138 to 141 (NKAD) are G4. Residues 175-177 (SAL) form a G5 region.

This sequence belongs to the TRAFAC class translation factor GTPase superfamily. Classic translation factor GTPase family. EF-Tu/EF-1A subfamily. Monomer.

It is found in the cytoplasm. It catalyses the reaction GTP + H2O = GDP + phosphate + H(+). Functionally, GTP hydrolase that promotes the GTP-dependent binding of aminoacyl-tRNA to the A-site of ribosomes during protein biosynthesis. This chain is Elongation factor Tu 1, found in Wolbachia sp. subsp. Brugia malayi (strain TRS).